Reading from the N-terminus, the 255-residue chain is MKKIVTATIATAGLATIAFAGHDAQAAEQNNNGYNSNDAQSYSYTYTIDAQGNYHYTWTGNWNPSQLTQNNTYYYNNYNTYSYNNASYNNYYNHSYQYNNYTNNSQTATNNYYTGGSGASYSTTSNNVHVTTTAAPSSNGRSISNGYASGSNLYTSGQCTYYVFDRVGGKIGSTWGNASNWANAAASSGYTVNNTPKVGAIMQTTQGYYGHVAYVEGVNSNGSVRVSEMNYGHGAGVVTSRTISANQAGSYNFIH.

An N-terminal signal peptide occupies residues 1-26; it reads MKKIVTATIATAGLATIAFAGHDAQA. 3 repeat units span residues 75-78, 88-91, and 98-101. The tract at residues 75–101 is 3 X 4 AA repeats of Y-N-N-Y; the sequence is YNNYNTYSYNNASYNNYYNHSYQYNNY. A Peptidase C51 domain is found at 134-255; that stretch reads AAPSSNGRSI…NQAGSYNFIH (122 aa).

Its subcellular location is the secreted. Not known; immunogenic protein. This Staphylococcus aureus (strain MW2) protein is Staphylococcal secretory antigen ssaA1 (ssaA1).